A 348-amino-acid polypeptide reads, in one-letter code: Nicotinate-nucleotide--dimethylbenzimidazole phosphoribosyltransferase (348 aa).

The active-site Proton acceptor is Glu-316.

This sequence belongs to the CobT family.

The enzyme catalyses 5,6-dimethylbenzimidazole + nicotinate beta-D-ribonucleotide = alpha-ribazole 5'-phosphate + nicotinate + H(+). It functions in the pathway nucleoside biosynthesis; alpha-ribazole biosynthesis; alpha-ribazole from 5,6-dimethylbenzimidazole: step 1/2. Functionally, catalyzes the synthesis of alpha-ribazole-5'-phosphate from nicotinate mononucleotide (NAMN) and 5,6-dimethylbenzimidazole (DMB). This chain is Nicotinate-nucleotide--dimethylbenzimidazole phosphoribosyltransferase, found in Xanthomonas campestris pv. campestris (strain B100).